A 631-amino-acid polypeptide reads, in one-letter code: MKSYPLLSTIDQPADLRGLSRAELKQLAQELRDHVLTSVSQTGGHLSSNLGTVELTIALHHVFNTPQDRLVWDVGHQTYPHKILTGRRDRMAGLRQLGGISGFPRRDESEYDTFGTAHSSTSISAALGMALAAKIKGEDRRSVAIIGDGAMTAGMAFEALNNAGVSGANMLVVLNDNDMSISPPVGALNRYFARLMSGRFYSAARQGAKSVLKNAPPLLELARRFEEHAKGMIVPSTIFEEFGFTYVGPIDGHDLDSLIPTLENLRDRKGPQFLHVVTKKGYGYKLAEADPVAYHGPGKFNPAEGLKKAAPGKPSFTQVFGQWLCDMAAKDTRLVGITPAMREGSGMVEFEQRFPDRYFDVGIAEQHAVTFAAGLACEGLKPVVAIYSTFLQRGYDQLIHDVAIQNLPVVFALDRAGIVGADGATHAGAYDIAYVRCVPHLSLIAPADENECRQALTAAFEQQHPVAVRYPRGAGVGVAVQSELTALPWGRGELRREARGGGRRIAILAFGTLLYPALAAAEKLDATVANMRFIKPLDTELVLSLARSHEALVTVEEGCLQGGAGSAVLEALQAAGVNLPVLTLGLPDEFVEHGDPAKLLAQLGLDAAGIEQSILKRFGAKLELVRPAING.

Residues H76 and 117–119 (AHS) contribute to the thiamine diphosphate site. D148 contributes to the Mg(2+) binding site. Thiamine diphosphate-binding positions include 149–150 (GA), N177, Y284, and E365. Position 177 (N177) interacts with Mg(2+).

This sequence belongs to the transketolase family. DXPS subfamily. In terms of assembly, homodimer. It depends on Mg(2+) as a cofactor. Thiamine diphosphate is required as a cofactor.

The catalysed reaction is D-glyceraldehyde 3-phosphate + pyruvate + H(+) = 1-deoxy-D-xylulose 5-phosphate + CO2. It functions in the pathway metabolic intermediate biosynthesis; 1-deoxy-D-xylulose 5-phosphate biosynthesis; 1-deoxy-D-xylulose 5-phosphate from D-glyceraldehyde 3-phosphate and pyruvate: step 1/1. Functionally, catalyzes the acyloin condensation reaction between C atoms 2 and 3 of pyruvate and glyceraldehyde 3-phosphate to yield 1-deoxy-D-xylulose-5-phosphate (DXP). The sequence is that of 1-deoxy-D-xylulose-5-phosphate synthase from Methylibium petroleiphilum (strain ATCC BAA-1232 / LMG 22953 / PM1).